The sequence spans 1177 residues: DNA-directed RNA polymerase subunit beta (1177 aa).

Residues 1147 to 1161 (DDTEIEMRDTEDDDD) are compositionally biased toward acidic residues. Residues 1147 to 1177 (DDTEIEMRDTEDDDDHQSADKLNVEVETTKE) are disordered. Basic and acidic residues predominate over residues 1162–1177 (HQSADKLNVEVETTKE).

Belongs to the RNA polymerase beta chain family. The RNAP catalytic core consists of 2 alpha, 1 beta, 1 beta' and 1 omega subunit. When a sigma factor is associated with the core the holoenzyme is formed, which can initiate transcription.

It carries out the reaction RNA(n) + a ribonucleoside 5'-triphosphate = RNA(n+1) + diphosphate. In terms of biological role, DNA-dependent RNA polymerase catalyzes the transcription of DNA into RNA using the four ribonucleoside triphosphates as substrates. The protein is DNA-directed RNA polymerase subunit beta of Bacillus thuringiensis (strain Al Hakam).